Reading from the N-terminus, the 131-residue chain is MMFERSPDDPLPLVYACSGCSNVAQLANDLALRLDRARLAEMSCIAGVGGDVPLLVRRARSGRPILALDGCPLHCVKGCLARHEVVPTLHLTLSEHGLKKRYGEDCEAQDAERLFVELERLLTPGGKRRCE.

Its function is as follows. Plays an essential role by modulating the expression of hundreds of genes including quorum sensing system genes and oxidative stress resistance genes under both aerobic and anaerobic conditions. This is Anaerobic and virulence modulator AnvM from Pseudomonas aeruginosa (strain ATCC 15692 / DSM 22644 / CIP 104116 / JCM 14847 / LMG 12228 / 1C / PRS 101 / PAO1).